We begin with the raw amino-acid sequence, 1224 residues long: MGHSHSTGKEINDNELFTCEDPVFDQPVASPKSEISSKLAEEIERSKSPLILEVSPRTPDSVQMFRPTFDTFRPPNSDSSTFRGSQSREDLVACSSMNSVNNVHDMNTVSSSSSSSAPLFVALYDFHGVGEEQLSLRKGDQVRILGYNKNNEWCEARLYSTRKNDASNQRRLGEIGWVPSNFIAPYNSLDKYTWYHGKISRSDSEAILGSGITGSFLVRESETSIGQYTISVRHDGRVFHYRINVDNTEKMFITQEVKFRTLGELVHHHSVHADGLICLLMYPASKKDKGRGLFSLSPNAPDEWELDRSEIIMHNKLGGGQYGDVYEGYWKRHDCTIAVKALKEDAMPLHEFLAEAAIMKDLHHKNLVRLLGVCTHEAPFYIITEFMCNGNLLEYLRRTDKSLLPPIILVQMASQIASGMSYLEARHFIHRDLAARNCLVSEHNIVKIADFGLARFMKEDTYTAHAGAKFPIKWTAPEGLAFNTFSSKSDVWAFGVLLWEIATYGMAPYPGVELSNVYGLLENGFRMDGPQGCPPSVYRLMLQCWNWSPSDRPRFRDIHFNLENLISSNSLNDEVQKQLKKNNDKKLESDKRRSNVRERSDSKSRHSSHHDRDRDRESLHSRNSNPEIPNRSFIRTDDSVSFFNPSTTSKVTSFRAQGPPFPPPPQQNTKPKLLKSVLNSNARHASEEFERNEQDDVVPLAEKNVRKAVTRLGGTMPKGQRIDAYLDSMRRVDSWKESTDADNEGAGSSSLSRTVSNDSLDTLPLPDSMNSSTYVKMHPASGENVFLRQIRSKLKKRSETPELDHIDSDTADETTKSEKSPFGSLNKSSIKYPIKNAPEFSENHSRVSPVPVPPSRNASVSVRPDSKAEDSSDETTKDVGMWGPKHAVTRKIEIVKNDSYPNVEGELKAKIRNLRHVPKEESNTSSQEDLPLDATDNTNDSIIVIPRDEKAKVRQLVTQKVSPLQHHRPFSLQCPNNSTSSAISHSEHADSSETSSLSGVYEERMKPELPRKRSNGDTKVVPVTWIINGEKEPNGMARTKSLRDITSKFEQLGTASTIESKIEEAVPYREHALEKKGTSKRFSMLEGSNELKHVVPPRKNRNQDESGSIDEEPVSKDMIVSLLKVIQKEFVNLFNLASSEITDEKLQQFVIMADNVQKLHSTCSVYAEQISPHSKFRFKELLSQLEIYNRQIKFSHNPRAKPVDDKLKMAFQDCFDQIMRLVDR.

Residues 115–188 (SSAPLFVALY…PSNFIAPYNS (74 aa)) enclose the SH3 domain. Residues 194–284 (WYHGKISRSD…GLICLLMYPA (91 aa)) enclose the SH2 domain. Residues 311-562 (IIMHNKLGGG…PRFRDIHFNL (252 aa)) enclose the Protein kinase domain. ATP-binding positions include 317 to 325 (LGGGQYGDV), Lys340, and 385 to 391 (EFMCNGN). The active-site Proton acceptor is the Asp432. Residues 450–474 (DFGLARFMKEDTYTAHAGAKFPIKW) carry the Kinase activation loop motif. Residues 579–620 (LKKNNDKKLESDKRRSNVRERSDSKSRHSSHHDRDRDRESLH) are compositionally biased toward basic and acidic residues. Disordered regions lie at residues 579 to 671 (LKKN…NTKP), 736 to 775 (KEST…STYV), 796 to 881 (KRSE…DVGM), 914 to 937 (LRHV…ATDN), and 968 to 1016 (RPFS…RSNG). Polar residues-rich tracts occupy residues 639-655 (SVSF…TSFR) and 746-760 (AGSS…NDSL). Composition is skewed to basic and acidic residues over residues 797–819 (RSET…KSEK) and 864–877 (PDSK…ETTK). The segment covering 973–984 (QCPNNSTSSAIS) has biased composition (polar residues). Over residues 1001–1016 (YEERMKPELPRKRSNG) the composition is skewed to basic and acidic residues.

This sequence belongs to the protein kinase superfamily. Tyr protein kinase family. ABL subfamily. In terms of assembly, interacts (via SH2 and SH3 domains) with mig-13; the interaction is direct. May interact with soem-1.

The protein resides in the cell membrane. The protein localises to the cytoplasm. The enzyme catalyses L-tyrosyl-[protein] + ATP = O-phospho-L-tyrosyl-[protein] + ADP + H(+). Functions downstream of migratory protein mig-13 and is involved in Q neuroblast migration during larval development. Recruited by mig-13 to the leading edge of Q neuroblasts and their descendents to signal downstream, likely to the wve-1 pathway, and direct migration along the anteroposterior body axis. Promotes germline cell apoptosis in response to oxidative, osmotic and heat shock stresses. This chain is Tyrosine-protein kinase abl-1 (abl-1), found in Caenorhabditis elegans.